Here is a 537-residue protein sequence, read N- to C-terminus: 2-succinyl-5-enolpyruvyl-6-hydroxy-3-cyclohexene-1-carboxylate synthase (537 aa).

It belongs to the TPP enzyme family. MenD subfamily. In terms of assembly, homodimer. Mg(2+) is required as a cofactor. Mn(2+) serves as cofactor. Requires thiamine diphosphate as cofactor.

The enzyme catalyses isochorismate + 2-oxoglutarate + H(+) = 5-enolpyruvoyl-6-hydroxy-2-succinyl-cyclohex-3-ene-1-carboxylate + CO2. Its pathway is quinol/quinone metabolism; 1,4-dihydroxy-2-naphthoate biosynthesis; 1,4-dihydroxy-2-naphthoate from chorismate: step 2/7. The protein operates within quinol/quinone metabolism; menaquinone biosynthesis. Functionally, catalyzes the thiamine diphosphate-dependent decarboxylation of 2-oxoglutarate and the subsequent addition of the resulting succinic semialdehyde-thiamine pyrophosphate anion to isochorismate to yield 2-succinyl-5-enolpyruvyl-6-hydroxy-3-cyclohexene-1-carboxylate (SEPHCHC). The protein is 2-succinyl-5-enolpyruvyl-6-hydroxy-3-cyclohexene-1-carboxylate synthase of Nocardioides sp. (strain ATCC BAA-499 / JS614).